The chain runs to 636 residues: Chaperone protein DnaK (636 aa).

Position 196 is a phosphothreonine; by autocatalysis (T196). The interval 591–636 (LAEAMYKSSSQPGAQEAPPTDGQPKPDEKGKDNVVDAEFVDVDDKK) is disordered. Basic and acidic residues predominate over residues 614–624 (PKPDEKGKDNV).

The protein belongs to the heat shock protein 70 family.

Its function is as follows. Acts as a chaperone. This Solibacter usitatus (strain Ellin6076) protein is Chaperone protein DnaK.